Reading from the N-terminus, the 252-residue chain is uncharacterized protein (252 aa).

Tandem repeats lie at residues 68–82 (TYNQ…DLVD), 83–97 (TYNQ…DLVD), 98–112 (TYNQ…DLVD), 113–127 (TYNQ…DLVD), 128–142 (TYNQ…DLVD), 143–157 (TYNQ…DLVD), 158–172 (TYNQ…DLID), 173–187 (TYNQ…DLVD), 188–202 (TYNQ…DLVD), and 203–217 (TYNQ…DLVD). Residues 68–246 (TYNQSQNVCP…LIDTYNQSQN (179 aa)) form a 13 X 15 AA tandem repeats region. One copy of the 11; truncated repeat lies at 218 to 230 (TYNQSQNVCPQDL). One copy of the 12; truncated repeat lies at 231-239 (NVYTQDLID). The stretch at 240 to 246 (TYNQSQN) is one 13; truncated repeat.

Functionally, a protein probably derived from this gene is found in cuboidal crystalline inclusions, but is not toxic even when coexpressed with upstream ORF1. The protein runs anomalously as a 50 kDa band in gels. This is an uncharacterized protein from Bacillus thuringiensis subsp. kurstaki.